Reading from the N-terminus, the 465-residue chain is Ribulose bisphosphate carboxylase large chain (465 aa).

K4 carries the post-translational modification N6,N6,N6-trimethyllysine. 2 residues coordinate substrate: X113 and T163. K165 (proton acceptor) is an active-site residue. K167 serves as a coordination point for substrate. K191, D193, and E194 together coordinate Mg(2+). K191 is subject to N6-carboxylysine. The active-site Proton acceptor is H284. Substrate contacts are provided by R285, H317, and S369.

The protein belongs to the RuBisCO large chain family. Type I subfamily. Heterohexadecamer of 8 large chains and 8 small chains; disulfide-linked. The disulfide link is formed within the large subunit homodimers. Requires Mg(2+) as cofactor. In terms of processing, the disulfide bond which can form in the large chain dimeric partners within the hexadecamer appears to be associated with oxidative stress and protein turnover.

Its subcellular location is the plastid. It is found in the chloroplast. The enzyme catalyses 2 (2R)-3-phosphoglycerate + 2 H(+) = D-ribulose 1,5-bisphosphate + CO2 + H2O. It catalyses the reaction D-ribulose 1,5-bisphosphate + O2 = 2-phosphoglycolate + (2R)-3-phosphoglycerate + 2 H(+). Functionally, ruBisCO catalyzes two reactions: the carboxylation of D-ribulose 1,5-bisphosphate, the primary event in carbon dioxide fixation, as well as the oxidative fragmentation of the pentose substrate in the photorespiration process. Both reactions occur simultaneously and in competition at the same active site. In Cornus obliqua (Silky dogwood), this protein is Ribulose bisphosphate carboxylase large chain.